We begin with the raw amino-acid sequence, 1584 residues long: Sterile alpha motif domain-containing protein 9-like (1584 aa).

Positions 14–79 (WTKEHVKKWV…RSYNKLNSKS (66 aa)) constitute an SAM domain. The segment at 76–122 (NSKSPESDNHDPGQLDNSKPSKTEHQKNPKHTKKEEENSMSSNIDYD) is disordered. Basic and acidic residues predominate over residues 80–112 (PESDNHDPGQLDNSKPSKTEHQKNPKHTKKEEE).

In terms of assembly, interacts with EEA1. Widely expressed in adult and fetal tissues. Expressed in the cerebellum. Variable expression in tumors. Down-regulated in breast cancer.

The protein resides in the early endosome. The protein localises to the mitochondrion. Functionally, may be involved in endosome fusion. Mediates down-regulation of growth factor signaling via internalization of growth factor receptors. The protein is Sterile alpha motif domain-containing protein 9-like (SAMD9L) of Homo sapiens (Human).